Reading from the N-terminus, the 201-residue chain is Potassium-transporting ATPase KdpC subunit (201 aa).

A helical membrane pass occupies residues 7–27 (PAFVVLIALTALTGLAYPLAM).

It belongs to the KdpC family. In terms of assembly, the system is composed of three essential subunits: KdpA, KdpB and KdpC.

The protein localises to the cell inner membrane. Part of the high-affinity ATP-driven potassium transport (or Kdp) system, which catalyzes the hydrolysis of ATP coupled with the electrogenic transport of potassium into the cytoplasm. This subunit acts as a catalytic chaperone that increases the ATP-binding affinity of the ATP-hydrolyzing subunit KdpB by the formation of a transient KdpB/KdpC/ATP ternary complex. The sequence is that of Potassium-transporting ATPase KdpC subunit from Xanthobacter autotrophicus (strain ATCC BAA-1158 / Py2).